The chain runs to 129 residues: Small ribosomal subunit protein uS11 (129 aa).

It belongs to the universal ribosomal protein uS11 family. In terms of assembly, part of the 30S ribosomal subunit. Interacts with proteins S7 and S18. Binds to IF-3.

Its function is as follows. Located on the platform of the 30S subunit, it bridges several disparate RNA helices of the 16S rRNA. Forms part of the Shine-Dalgarno cleft in the 70S ribosome. The polypeptide is Small ribosomal subunit protein uS11 (Carboxydothermus hydrogenoformans (strain ATCC BAA-161 / DSM 6008 / Z-2901)).